Reading from the N-terminus, the 571-residue chain is MSFEMSREQYASLYGPTTGDAIRLADTELFARIEKDLTAPGEEAVFGGGKVVRDGMGQNGRLGRDEDVPDLVITNVVVIDWTGICKADVAVRDGHIMRIGKAGNPHVMDGVDIVIGVATDVIAGEGKILTAGGIDSHIHFISPDQIETALVSGITTMIGGGTGPSESTKATTITPGAWNIHNMLRSFEQFPMNFGLLGKGHGSSVPAMAEQITAGAIGLKIHEDWGATPSSINTSLQVADEYDVQVAIHTDTLNEAGFVEDTRAAIAGRVIHTFHTEGAGGGHAPDIIELAQDPNILPASTNPTLPYTRNTLEEHLDMLMVCHHLNPGIPEDVAFADSRIRKETIAAEDVLQDMGIFSMTSSDSQAMGRVGEVVLRTWQVADSMKRQRGPLPEDEGTGGDNHRIRRYIAKYTINPATAHGISHAVGSVEEGKFADLVLWEPRFFGVKPDLILKGGQMVHGVMGDPNASIPTPQPRWYRRAFGAYGTAVAASSITFLSRAAIRAGVPETLGLRKVVRECRDIRTLTKADMKLNGETPPLRVDPQTYEVRVDGTPVTCEPQHVLPMAQRYFLF.

The Urease domain maps to 132-571 (GGIDSHIHFI…LPMAQRYFLF (440 aa)). Positions 137, 139, and 220 each coordinate Ni(2+). Lys220 carries the N6-carboxylysine modification. Residue His222 coordinates substrate. His249 and His275 together coordinate Ni(2+). The Proton donor role is filled by His323. Asp363 provides a ligand contact to Ni(2+).

Belongs to the metallo-dependent hydrolases superfamily. Urease alpha subunit family. In terms of assembly, heterotrimer of UreA (gamma), UreB (beta) and UreC (alpha) subunits. Three heterotrimers associate to form the active enzyme. It depends on Ni cation as a cofactor. Carboxylation allows a single lysine to coordinate two nickel ions.

It is found in the cytoplasm. The catalysed reaction is urea + 2 H2O + H(+) = hydrogencarbonate + 2 NH4(+). It participates in nitrogen metabolism; urea degradation; CO(2) and NH(3) from urea (urease route): step 1/1. The sequence is that of Urease subunit alpha from Kocuria rhizophila (strain ATCC 9341 / DSM 348 / NBRC 103217 / DC2201).